Here is a 375-residue protein sequence, read N- to C-terminus: Zinc finger CCCH domain-containing protein 57 (375 aa).

5 consecutive C3H1-type zinc fingers follow at residues 42 to 70 (RHGEPDCAYYIRTGLCRFGSTCRFNHPHD), 87 to 115 (RIGQPECEFYLKTGTCKFGVTCKFHHPRN), 133 to 161 (RPNEDDCSYFLRIGQCKFGGTCKFNHPQT), 243 to 271 (RPGQPECQFYMKTGDCKFGTVCKFHHPRD), and 289 to 317 (RPGEPLCVFYSRYGICKFGPSCKFDHPMR). The segment at 352–375 (SVEAKPTSLPETTSAKDTIVDAQH) is disordered.

It localises to the nucleus. The polypeptide is Zinc finger CCCH domain-containing protein 57 (ZFN3) (Arabidopsis thaliana (Mouse-ear cress)).